The following is a 341-amino-acid chain: L-threonine 3-dehydrogenase (341 aa).

Zn(2+) is bound at residue cysteine 38. Residues threonine 40 and histidine 43 each act as charge relay system in the active site. 6 residues coordinate Zn(2+): histidine 63, glutamate 64, cysteine 93, cysteine 96, cysteine 99, and cysteine 107. NAD(+)-binding positions include isoleucine 175, aspartate 195, arginine 200, 262–264 (LGI), and 286–287 (IY).

The protein belongs to the zinc-containing alcohol dehydrogenase family. In terms of assembly, homotetramer. Zn(2+) serves as cofactor.

It is found in the cytoplasm. The enzyme catalyses L-threonine + NAD(+) = (2S)-2-amino-3-oxobutanoate + NADH + H(+). Its pathway is amino-acid degradation; L-threonine degradation via oxydo-reductase pathway; glycine from L-threonine: step 1/2. Its function is as follows. Catalyzes the NAD(+)-dependent oxidation of L-threonine to 2-amino-3-ketobutyrate. In Yersinia pestis bv. Antiqua (strain Antiqua), this protein is L-threonine 3-dehydrogenase.